The primary structure comprises 151 residues: Ubiquitin-conjugating enzyme E2 W (151 aa).

Met-1 is covalently cross-linked (Peptide (Met-Gly) (interchain with G-Cter in ubiquitin)). The 149-residue stretch at 3–151 folds into the UBC core domain; it reads SMQKRLQKEL…TKWWYHDDTC (149 aa). Cys-91 acts as the Glycyl thioester intermediate in catalysis.

This sequence belongs to the ubiquitin-conjugating enzyme family. As to quaternary structure, homodimer. Interacts with FANCL. Interacts with STUB1/CHIP. In terms of processing, ubiquitinated in vitro in the presence of FANCL. Autoubiquitinated at Met-1.

The protein localises to the nucleus. The enzyme catalyses S-ubiquitinyl-[E1 ubiquitin-activating enzyme]-L-cysteine + [E2 ubiquitin-conjugating enzyme]-L-cysteine = [E1 ubiquitin-activating enzyme]-L-cysteine + S-ubiquitinyl-[E2 ubiquitin-conjugating enzyme]-L-cysteine.. The catalysed reaction is S-ubiquitinyl-[E1 ubiquitin-activating enzyme]-L-cysteine + [acceptor protein]-N-terminal-amino acid = [E1 ubiquitin-activating enzyme]-L-cysteine + N-terminal-ubiquitinyl-[acceptor protein].. Its pathway is protein modification; protein ubiquitination. Accepts ubiquitin from the E1 complex and catalyzes its covalent attachment to other proteins. Specifically monoubiquitinates the N-terminus of various substrates, including ATXN3, MAPT/TAU, POLR2H/RPB8 and STUB1/CHIP, by recognizing backbone atoms of disordered N-termini. Involved in degradation of misfolded chaperone substrates by mediating monoubiquitination of STUB1/CHIP, leading to recruitment of ATXN3 to monoubiquitinated STUB1/CHIP, and restriction of the length of ubiquitin chain attached to STUB1/CHIP substrates by ATXN3. After UV irradiation, but not after mitomycin-C (MMC) treatment, acts as a specific E2 ubiquitin-conjugating enzyme for the Fanconi anemia complex by associating with E3 ubiquitin-protein ligase FANCL and catalyzing monoubiquitination of FANCD2, a key step in the DNA damage pathway. In vitro catalyzes 'Lys-11'-linked polyubiquitination. UBE2W-catalyzed ubiquitination also occurs in the presence of inactive RING/U-box type E3s, i.e. lacking the active site cysteine residues to form thioester bonds with ubiquitin, or even in the absence of E3, albeit at a slower rate. In Bos taurus (Bovine), this protein is Ubiquitin-conjugating enzyme E2 W (UBE2W).